Consider the following 511-residue polypeptide: Acetylcholine receptor subunit alpha-type unc-38 (511 aa).

Positions methionine 1–serine 16 are cleaved as a signal peptide. At phenylalanine 17–threonine 261 the chain is on the extracellular side. Asparagine 124 carries N-linked (GlcNAc...) asparagine glycosylation. A disulfide bond links cysteine 151 and cysteine 165. Asparagine 202 carries an N-linked (GlcNAc...) asparagine glycan. A disulfide bridge links cysteine 238 with cysteine 239. 3 helical membrane-spanning segments follow: residues valine 262–proline 282, leucine 291–proline 311, and leucine 324–leucine 344. Residues histidine 345–arginine 464 are Cytoplasmic-facing. A helical transmembrane segment spans residues leucine 465 to alanine 485.

It belongs to the ligand-gated ion channel (TC 1.A.9) family. Acetylcholine receptor (TC 1.A.9.1) subfamily. As to quaternary structure, component of nicotinic acetylcholine receptor. In muscles, composed of 2 non-alpha subunits lev-1 and unc-29, and 3 alpha subunits unc-38, unc-63 and lev-8. In cholinergic motoneurons, composed of 2 non-alpha subunits acr-2 and acr-3, and 3 alpha subunits unc-38, unc-63 and acr-12.

The protein localises to the postsynaptic cell membrane. It is found in the cell membrane. In terms of biological role, alpha subunit of nicotinic acetylcholine receptor (nAChR). Probably acts in cholinergic motoneurons to regulate presynaptic neurotransmitter release, thereby ensuring normal level of excitation of cholinergic motoneurons during locomotion. Involved in nAChR sensitivity to nicotine. This Caenorhabditis elegans protein is Acetylcholine receptor subunit alpha-type unc-38 (unc-38).